We begin with the raw amino-acid sequence, 299 residues long: Oxygen-dependent coproporphyrinogen-III oxidase (299 aa).

Ser-92 contacts substrate. A divalent metal cation-binding residues include His-96 and His-106. The active-site Proton donor is His-106. Substrate is bound at residue 108 to 110; sequence NVR. A divalent metal cation is bound by residues His-145 and His-175. The segment at 240 to 275 is important for dimerization; it reads YVEFNLVWDRGTLFGLQTGGRTESILMSMPPLVRWE. 258-260 is a substrate binding site; that stretch reads GGR.

This sequence belongs to the aerobic coproporphyrinogen-III oxidase family. Homodimer. It depends on a divalent metal cation as a cofactor.

The protein localises to the cytoplasm. It catalyses the reaction coproporphyrinogen III + O2 + 2 H(+) = protoporphyrinogen IX + 2 CO2 + 2 H2O. Its pathway is porphyrin-containing compound metabolism; protoporphyrin-IX biosynthesis; protoporphyrinogen-IX from coproporphyrinogen-III (O2 route): step 1/1. Its function is as follows. Involved in the heme biosynthesis. Catalyzes the aerobic oxidative decarboxylation of propionate groups of rings A and B of coproporphyrinogen-III to yield the vinyl groups in protoporphyrinogen-IX. This Shigella boydii serotype 18 (strain CDC 3083-94 / BS512) protein is Oxygen-dependent coproporphyrinogen-III oxidase.